The following is a 315-amino-acid chain: Type II restriction enzyme AvaI (315 aa).

The enzyme catalyses Endonucleolytic cleavage of DNA to give specific double-stranded fragments with terminal 5'-phosphates.. In terms of biological role, a P subtype restriction enzyme that recognizes the double-stranded sequence 5'-CYCGRG-3' and cleaves after C-1. The chain is Type II restriction enzyme AvaI from Anabaena variabilis.